We begin with the raw amino-acid sequence, 153 residues long: Small ribosomal subunit protein bS16 (153 aa).

A disordered region spans residues 130–153 (EAEAAAAAEEAPAEEAAEEAPAEA). Over residues 140 to 153 (APAEEAAEEAPAEA) the composition is skewed to acidic residues.

This sequence belongs to the bacterial ribosomal protein bS16 family.

This is Small ribosomal subunit protein bS16 from Bifidobacterium longum (strain NCC 2705).